The sequence spans 152 residues: Ubiquitin-conjugating enzyme E2 B (152 aa).

The UBC core domain maps to 4-150; it reads PARRRLMRDF…VSAIVEQSWN (147 aa). Catalysis depends on C88, which acts as the Glycyl thioester intermediate.

This sequence belongs to the ubiquitin-conjugating enzyme family. Interacts with RAD18, UBR2 and WAC.

It is found in the cell membrane. Its subcellular location is the nucleus. It carries out the reaction S-ubiquitinyl-[E1 ubiquitin-activating enzyme]-L-cysteine + [E2 ubiquitin-conjugating enzyme]-L-cysteine = [E1 ubiquitin-activating enzyme]-L-cysteine + S-ubiquitinyl-[E2 ubiquitin-conjugating enzyme]-L-cysteine.. It functions in the pathway protein modification; protein ubiquitination. E2 ubiquitin-conjugating enzyme that accepts ubiquitin from the ubiquitin-activating enzyme E1 and transfers it to a E3 ubiquitin-protein ligase. In vitro catalyzes 'Lys-11'-, as well as 'Lys-48'- and 'Lys-63'-linked polyubiquitination. Together with the E3 enzyme BRE1 (RNF20 and/or RNF40), plays a role in transcription regulation by catalyzing the monoubiquitination of histone H2B at 'Lys-120' to form H2BK120ub1. H2BK120ub1 gives a specific tag for epigenetic transcriptional activation, elongation by RNA polymerase II, telomeric silencing, and is also a prerequisite for H3K4me and H3K79me formation. May play a role in DNA repair. Associates to the E3 ligase RAD18 to form the UBE2B-RAD18 ubiquitin ligase complex involved in mono-ubiquitination of DNA-associated PCNA on 'Lys-164'. In association with the E3 enzyme UBR4, is involved in N-end rule-dependent protein degradation. May be involved in neurite outgrowth. The protein is Ubiquitin-conjugating enzyme E2 B (UBE2B) of Bos taurus (Bovine).